The following is a 792-amino-acid chain: Phenylalanine--tRNA ligase beta subunit (792 aa).

In terms of domain architecture, tRNA-binding spans 39–150 (APAFHKVVVA…PDAPVGTDFR (112 aa)). A B5 domain is found at 405–480 (PARDPIRLGL…RMYGYNRIAA (76 aa)). 4 residues coordinate Mg(2+): D458, D464, E467, and E468. The FDX-ACB domain maps to 698-791 (SKYPPIRRDI…LENRFGARLR (94 aa)).

Belongs to the phenylalanyl-tRNA synthetase beta subunit family. Type 1 subfamily. Tetramer of two alpha and two beta subunits. Mg(2+) is required as a cofactor.

The protein localises to the cytoplasm. It catalyses the reaction tRNA(Phe) + L-phenylalanine + ATP = L-phenylalanyl-tRNA(Phe) + AMP + diphosphate + H(+). The chain is Phenylalanine--tRNA ligase beta subunit from Nitrosospira multiformis (strain ATCC 25196 / NCIMB 11849 / C 71).